A 152-amino-acid chain; its full sequence is UPF0225 protein YchJ (152 aa).

This sequence belongs to the UPF0225 family.

This Shigella dysenteriae serotype 1 (strain Sd197) protein is UPF0225 protein YchJ.